We begin with the raw amino-acid sequence, 375 residues long: Cinnamyl alcohol dehydrogenase 3 (375 aa).

C44 contacts Zn(2+). S46 is an NADP(+) binding site. 7 residues coordinate Zn(2+): H66, E67, C97, C100, C103, C111, and C160. NADP(+) is bound by residues T164, 186-191, 209-214, T249, G273, and 296-298; these read GLGGLG, SRSSEK, and SQI.

This sequence belongs to the zinc-containing alcohol dehydrogenase family. As to quaternary structure, homodimer. Zn(2+) is required as a cofactor. Expressed in the root tips. Expressed in the apical meristematic regions, leaf veins and at the base of the trichomes. Expressed at the base of the stems. Expressed in the abscission zones of newly formed siliques.

The catalysed reaction is (E)-cinnamyl alcohol + NADP(+) = (E)-cinnamaldehyde + NADPH + H(+). It carries out the reaction (E)-coniferol + NADP(+) = (E)-coniferaldehyde + NADPH + H(+). It catalyses the reaction (E)-sinapyl alcohol + NADP(+) = (E)-sinapaldehyde + NADPH + H(+). The enzyme catalyses (E)-4-coumaroyl alcohol + NADP(+) = (E)-4-coumaraldehyde + NADPH + H(+). The catalysed reaction is (E)-caffeyl alcohol + NADP(+) = (E)-caffeyl aldehyde + NADPH + H(+). The protein operates within aromatic compound metabolism; phenylpropanoid biosynthesis. Involved in lignin biosynthesis. Catalyzes the final step specific for the production of lignin monomers. Catalyzes the NADPH-dependent reduction of coniferaldehyde, 5-hydroxyconiferaldehyde, sinapaldehyde, 4-coumaraldehyde and caffeyl aldehyde to their respective alcohols. The chain is Cinnamyl alcohol dehydrogenase 3 from Arabidopsis thaliana (Mouse-ear cress).